A 287-amino-acid chain; its full sequence is MARRFGVVAAHGKPEAVELADRIQRWLAAHQCQIANEEALPVVWPELDAIIAIGGDGLIMRVAHHYPDVPILGINVGRVGFLALAEREGWERALHDLVHDRYHVQEGPTLAVQLERGRSVLVDAWAINDVVVRAGYQLIEVELYIDGQFVNTYPGDGMIVATPQGSTAYCMAAGGPVLTAGVHGFAVTPICPHSPIRIALVVPEQATIEQVYVSDREARLIIDGEPVASLERGDLVRVRRGKQAFRLVVLPGTNFYEAFRSKFNFQIRPEAQPSRRTRNADTPSGAR.

Catalysis depends on Asp-56, which acts as the Proton acceptor. NAD(+) contacts are provided by residues 56-57, Arg-61, 128-129, and Asp-156; these read DG and ND.

The protein belongs to the NAD kinase family. A divalent metal cation serves as cofactor.

The protein localises to the cytoplasm. The enzyme catalyses NAD(+) + ATP = ADP + NADP(+) + H(+). Its function is as follows. Involved in the regulation of the intracellular balance of NAD and NADP, and is a key enzyme in the biosynthesis of NADP. Catalyzes specifically the phosphorylation on 2'-hydroxyl of the adenosine moiety of NAD to yield NADP. This Thermomicrobium roseum (strain ATCC 27502 / DSM 5159 / P-2) protein is NAD kinase.